A 91-amino-acid chain; its full sequence is Large ribosomal subunit protein bL27 (91 aa).

Residues 1–10 (MAQKKGGGST) are compositionally biased toward gly residues. A disordered region spans residues 1–20 (MAQKKGGGSTRNGRDSQPKM).

Belongs to the bacterial ribosomal protein bL27 family.

In Verminephrobacter eiseniae (strain EF01-2), this protein is Large ribosomal subunit protein bL27.